The primary structure comprises 425 residues: UDP-N-acetylglucosamine 1-carboxyvinyltransferase (425 aa).

22–23 (KN) lines the phosphoenolpyruvate pocket. Arg-98 is a binding site for UDP-N-acetyl-alpha-D-glucosamine. Cys-122 acts as the Proton donor in catalysis. Cys-122 bears the 2-(S-cysteinyl)pyruvic acid O-phosphothioketal mark. UDP-N-acetyl-alpha-D-glucosamine-binding positions include 127 to 131 (RPVDQ), Asp-313, and Ile-335.

This sequence belongs to the EPSP synthase family. MurA subfamily.

The protein resides in the cytoplasm. It carries out the reaction phosphoenolpyruvate + UDP-N-acetyl-alpha-D-glucosamine = UDP-N-acetyl-3-O-(1-carboxyvinyl)-alpha-D-glucosamine + phosphate. It participates in cell wall biogenesis; peptidoglycan biosynthesis. Functionally, cell wall formation. Adds enolpyruvyl to UDP-N-acetylglucosamine. The polypeptide is UDP-N-acetylglucosamine 1-carboxyvinyltransferase (Xylella fastidiosa (strain M23)).